We begin with the raw amino-acid sequence, 706 residues long: Ribosomal RNA large subunit methyltransferase K/L (706 aa).

In terms of domain architecture, THUMP spans 43-154 (LLYQSLLWSR…RDMASVALDL (112 aa)).

Belongs to the methyltransferase superfamily. RlmKL family.

It is found in the cytoplasm. It carries out the reaction guanosine(2445) in 23S rRNA + S-adenosyl-L-methionine = N(2)-methylguanosine(2445) in 23S rRNA + S-adenosyl-L-homocysteine + H(+). The enzyme catalyses guanosine(2069) in 23S rRNA + S-adenosyl-L-methionine = N(2)-methylguanosine(2069) in 23S rRNA + S-adenosyl-L-homocysteine + H(+). In terms of biological role, specifically methylates the guanine in position 2445 (m2G2445) and the guanine in position 2069 (m7G2069) of 23S rRNA. This is Ribosomal RNA large subunit methyltransferase K/L from Serratia proteamaculans (strain 568).